The chain runs to 271 residues: 3-deoxy-manno-octulosonate cytidylyltransferase (271 aa).

It belongs to the KdsB family.

It is found in the cytoplasm. The catalysed reaction is 3-deoxy-alpha-D-manno-oct-2-ulosonate + CTP = CMP-3-deoxy-beta-D-manno-octulosonate + diphosphate. Its pathway is nucleotide-sugar biosynthesis; CMP-3-deoxy-D-manno-octulosonate biosynthesis; CMP-3-deoxy-D-manno-octulosonate from 3-deoxy-D-manno-octulosonate and CTP: step 1/1. It functions in the pathway bacterial outer membrane biogenesis; lipopolysaccharide biosynthesis. Functionally, activates KDO (a required 8-carbon sugar) for incorporation into bacterial lipopolysaccharide in Gram-negative bacteria. This is 3-deoxy-manno-octulosonate cytidylyltransferase from Leptothrix cholodnii (strain ATCC 51168 / LMG 8142 / SP-6) (Leptothrix discophora (strain SP-6)).